The following is a 168-amino-acid chain: Transcription antitermination protein NusB (168 aa).

The protein belongs to the NusB family.

Involved in transcription antitermination. Required for transcription of ribosomal RNA (rRNA) genes. Binds specifically to the boxA antiterminator sequence of the ribosomal RNA (rrn) operons. The chain is Transcription antitermination protein NusB from Chlamydia trachomatis serovar L2 (strain ATCC VR-902B / DSM 19102 / 434/Bu).